A 115-amino-acid polypeptide reads, in one-letter code: Hydrogenase maturation factor HypA (115 aa).

His-2 is a binding site for Ni(2+). Zn(2+) contacts are provided by Cys-73, Cys-76, Cys-89, and Cys-92.

The protein belongs to the HypA/HybF family.

In terms of biological role, involved in the maturation of [NiFe] hydrogenases. Required for nickel insertion into the metal center of the hydrogenase. This is Hydrogenase maturation factor HypA from Polaromonas naphthalenivorans (strain CJ2).